A 156-amino-acid polypeptide reads, in one-letter code: Cyanate hydratase (156 aa).

Residues Arg96, Glu99, and Ser122 contribute to the active site.

This sequence belongs to the cyanase family.

The enzyme catalyses cyanate + hydrogencarbonate + 3 H(+) = NH4(+) + 2 CO2. Catalyzes the reaction of cyanate with bicarbonate to produce ammonia and carbon dioxide. The chain is Cyanate hydratase from Escherichia coli O9:H4 (strain HS).